The primary structure comprises 387 residues: Type 2 DNA topoisomerase 6 subunit A (387 aa).

The Topo IIA-type catalytic domain occupies 12-160 (EARKKAADTL…MLILSKEKGK (149 aa)). Y106 serves as the catalytic O-(5'-phospho-DNA)-tyrosine intermediate. Residues E207 and D259 each contribute to the Mg(2+) site.

Belongs to the TOP6A family. In terms of assembly, homodimer. Heterotetramer of two Top6A and two Top6B chains. Mg(2+) is required as a cofactor.

The catalysed reaction is ATP-dependent breakage, passage and rejoining of double-stranded DNA.. Relaxes both positive and negative superturns and exhibits a strong decatenase activity. In Sulfurisphaera tokodaii (strain DSM 16993 / JCM 10545 / NBRC 100140 / 7) (Sulfolobus tokodaii), this protein is Type 2 DNA topoisomerase 6 subunit A.